We begin with the raw amino-acid sequence, 457 residues long: Peptidyl-prolyl cis-trans isomerase FKBP5 (457 aa).

Met1 carries the N-acetylmethionine modification. The tract at residues 1-26 (MTTDEGAKNSGESPTATVAEQGEDIT) is disordered. Ser13 is subject to Phosphoserine. Lys28 carries the N6-acetyllysine modification. Residues 50-138 (GDKVYVHYKG…FFEIELLDFK (89 aa)) form the PPIase FKBP-type 1 domain. Position 155 is an N6-acetyllysine (Lys155). The region spanning 165 to 251 (GATVEIHLEG…IYEVTLKSFE (87 aa)) is the PPIase FKBP-type 2 domain. 3 TPR repeats span residues 268 to 301 (AAIV…LEME), 317 to 350 (LAAF…DSAN), and 351 to 384 (EKGL…NPQN). Positions 421-457 (AKEEANKAMGKKTSEGVTNEKGTDSSAVEEEKAEGHV) are disordered. Ser445 is modified (phosphoserine).

In terms of assembly, part of a heteromultimeric cytoplasmic complex with HSP90AA1, HSPA1A/HSPA1B and steroid receptors. Upon ligand binding dissociates from the complex and FKBP4 takes its place. Interacts with functionally mature heterooligomeric progesterone receptor complexes along with HSP90 and TEBP. Interacts with NR3C1. Interacts with Akt/AKT1 and PHLPP1; enhancing dephosphorylation and subsequent activation of Akt/AKT1. Interacts with IFI44L; this interaction modulates the kinase activity of IKBKB and IKBKE. Interacts with IKBKB and IKBKE. Acetylation impairs ability to promote interaction between Akt/AKT1 and PHLPP1. Deacetylation by SIRT7 promotes interaction between Akt/AKT1 and PHLPP1, leading to suppress Akt/AKT1 activation. Post-translationally, ubiquitinated, leading to degradation in a proteasome-dependent manner. Deubiquitinated by USP49, leading to stabilization.

Its subcellular location is the cytoplasm. The protein localises to the nucleus. It catalyses the reaction [protein]-peptidylproline (omega=180) = [protein]-peptidylproline (omega=0). Inhibited by both FK506 and rapamycin. Its function is as follows. Immunophilin protein with PPIase and co-chaperone activities. Component of unligated steroid receptors heterocomplexes through interaction with heat-shock protein 90 (HSP90). Plays a role in the intracellular trafficking of heterooligomeric forms of steroid hormone receptors maintaining the complex into the cytoplasm when unliganded. Acts as a regulator of Akt/AKT1 activity by promoting the interaction between Akt/AKT1 and PHLPP1, thereby enhancing dephosphorylation and subsequent activation of Akt/AKT1. Interacts with IKBKE and IKBKB which facilitates IKK complex assembly leading to increased IKBKE and IKBKB kinase activity, NF-kappaB activation, and IFN production. This is Peptidyl-prolyl cis-trans isomerase FKBP5 (FKBP5) from Chlorocebus aethiops (Green monkey).